Consider the following 931-residue polypeptide: Protocadherin gamma-A1 (931 aa).

The N-terminal stretch at 1-28 is a signal peptide; that stretch reads MKIQKKLTGCSRLMLLCLSLELLLEAGA. 6 Cadherin domains span residues 29–133, 134–242, 243–347, 348–452, 453–562, and 570–682; these read GNIH…TPQF, QLEE…PPAF, TQAQ…APEV, TITS…SPVF, HQDS…APEI, and DGST…EPSA. The Extracellular segment spans residues 29–692; it reads GNIHYSVPEE…KPNDSDLTLY (664 aa). N265, N419, and N545 each carry an N-linked (GlcNAc...) asparagine glycan. The N-linked (GlcNAc...) asparagine glycan is linked to N685. A helical transmembrane segment spans residues 693 to 713; sequence LVVAAAAVSCVFLAFVIVLLA. Topologically, residues 714 to 931 are cytoplasmic; that stretch reads HRLRRWHKSR…KKKSGKKEKK (218 aa). Disordered regions lie at residues 801–840 and 901–931; these read KKEPFSQQAPPNTDWRFSQAQRPGTSGSQNGDDTGTWPNN and ATLTNAAGKRDGKAPAGGNGNKKKSGKKEKK. A compositionally biased stretch (polar residues) spans 805 to 840; the sequence is FSQQAPPNTDWRFSQAQRPGTSGSQNGDDTGTWPNN. Over residues 921–931 the composition is skewed to basic residues; sequence NKKKSGKKEKK.

It is found in the cell membrane. In terms of biological role, potential calcium-dependent cell-adhesion protein. May be involved in the establishment and maintenance of specific neuronal connections in the brain. This Homo sapiens (Human) protein is Protocadherin gamma-A1 (PCDHGA1).